The sequence spans 326 residues: MKAPVRVAVTGAAGQIGYSLLFRIASGDMLGKDQPVILQLLEITPALEALKGVVMELEDCAFPLVSGITTSDKAEEAFKDADIALLVGARPRGPGMERKDLLEANAAIFSAQGKALNDAASRDVKVLVVGNPANTNSLIAQRNAPDLDPRNFTAMTRLDHNRAVAQLANKTGAHNTEIKNMIIWGNHSATQYPDISKTKVKGEAAPGLVERDWYENDFIPTVQQRGAAIIKARGASSAASAASSAIDHIRDWVLGTPEGEWTSMAVPSDGSYGIEKGIIYSYPCVCRNGDYEIVQDLEIDEFSREKMQATEKELVEERDAVEHLLP.

Position 11 to 17 (11 to 17) interacts with NAD(+); sequence GAAGQIG. Substrate-binding residues include Arg-92 and Arg-98. NAD(+) contacts are provided by residues Asn-105, Gln-112, and 129 to 131; that span reads VGN. Substrate is bound by residues Asn-131 and Arg-162. His-187 functions as the Proton acceptor in the catalytic mechanism.

The protein belongs to the LDH/MDH superfamily. MDH type 2 family.

The catalysed reaction is (S)-malate + NAD(+) = oxaloacetate + NADH + H(+). Catalyzes the reversible oxidation of malate to oxaloacetate. This Alkalilimnicola ehrlichii (strain ATCC BAA-1101 / DSM 17681 / MLHE-1) protein is Malate dehydrogenase.